Consider the following 325-residue polypeptide: Tetraacyldisaccharide 4'-kinase (325 aa).

Residue 55 to 62 (TAGGNGKT) coordinates ATP.

Belongs to the LpxK family.

It catalyses the reaction a lipid A disaccharide + ATP = a lipid IVA + ADP + H(+). It functions in the pathway glycolipid biosynthesis; lipid IV(A) biosynthesis; lipid IV(A) from (3R)-3-hydroxytetradecanoyl-[acyl-carrier-protein] and UDP-N-acetyl-alpha-D-glucosamine: step 6/6. Functionally, transfers the gamma-phosphate of ATP to the 4'-position of a tetraacyldisaccharide 1-phosphate intermediate (termed DS-1-P) to form tetraacyldisaccharide 1,4'-bis-phosphate (lipid IVA). The sequence is that of Tetraacyldisaccharide 4'-kinase from Salmonella paratyphi A (strain ATCC 9150 / SARB42).